The chain runs to 439 residues: Ribosomal protein uS12 methylthiotransferase RimO (439 aa).

The MTTase N-terminal domain maps to 3–118; it reads KKFYITTLGC…AGKILREKFP (116 aa). [4Fe-4S] cluster-binding residues include cysteine 12, cysteine 48, cysteine 81, cysteine 157, cysteine 161, and cysteine 164. Positions 143 to 370 constitute a Radical SAM core domain; sequence NYSKPYAYVK…RDVHLAILEE (228 aa). The 66-residue stretch at 373 to 438 folds into the TRAM domain; the sequence is ESRIGQTYDA…EYDMNGTWIS (66 aa).

Belongs to the methylthiotransferase family. RimO subfamily. Requires [4Fe-4S] cluster as cofactor.

It localises to the cytoplasm. The catalysed reaction is L-aspartate(89)-[ribosomal protein uS12]-hydrogen + (sulfur carrier)-SH + AH2 + 2 S-adenosyl-L-methionine = 3-methylsulfanyl-L-aspartate(89)-[ribosomal protein uS12]-hydrogen + (sulfur carrier)-H + 5'-deoxyadenosine + L-methionine + A + S-adenosyl-L-homocysteine + 2 H(+). In terms of biological role, catalyzes the methylthiolation of an aspartic acid residue of ribosomal protein uS12. The sequence is that of Ribosomal protein uS12 methylthiotransferase RimO from Leptospira borgpetersenii serovar Hardjo-bovis (strain JB197).